Reading from the N-terminus, the 104-residue chain is Large ribosomal subunit protein uL24 (104 aa).

It belongs to the universal ribosomal protein uL24 family. Part of the 50S ribosomal subunit.

Functionally, one of two assembly initiator proteins, it binds directly to the 5'-end of the 23S rRNA, where it nucleates assembly of the 50S subunit. Its function is as follows. One of the proteins that surrounds the polypeptide exit tunnel on the outside of the subunit. The sequence is that of Large ribosomal subunit protein uL24 from Saccharopolyspora erythraea (strain ATCC 11635 / DSM 40517 / JCM 4748 / NBRC 13426 / NCIMB 8594 / NRRL 2338).